Consider the following 190-residue polypeptide: Threonylcarbamoyl-AMP synthase (190 aa).

In terms of domain architecture, YrdC-like spans 7–190 (TGSIAAVVDL…ALTGELFRQG (184 aa)).

Belongs to the SUA5 family. TsaC subfamily.

The protein localises to the cytoplasm. The enzyme catalyses L-threonine + hydrogencarbonate + ATP = L-threonylcarbamoyladenylate + diphosphate + H2O. Its function is as follows. Required for the formation of a threonylcarbamoyl group on adenosine at position 37 (t(6)A37) in tRNAs that read codons beginning with adenine. Catalyzes the conversion of L-threonine, HCO(3)(-)/CO(2) and ATP to give threonylcarbamoyl-AMP (TC-AMP) as the acyladenylate intermediate, with the release of diphosphate. In Salmonella paratyphi A (strain ATCC 9150 / SARB42), this protein is Threonylcarbamoyl-AMP synthase.